The chain runs to 476 residues: ATP synthase subunit beta (476 aa).

Residue 157–164 coordinates ATP; sequence GGAGVGKT.

Belongs to the ATPase alpha/beta chains family. As to quaternary structure, F-type ATPases have 2 components, CF(1) - the catalytic core - and CF(0) - the membrane proton channel. CF(1) has five subunits: alpha(3), beta(3), gamma(1), delta(1), epsilon(1). CF(0) has three main subunits: a(1), b(2) and c(9-12). The alpha and beta chains form an alternating ring which encloses part of the gamma chain. CF(1) is attached to CF(0) by a central stalk formed by the gamma and epsilon chains, while a peripheral stalk is formed by the delta and b chains.

The protein resides in the cell membrane. The catalysed reaction is ATP + H2O + 4 H(+)(in) = ADP + phosphate + 5 H(+)(out). Produces ATP from ADP in the presence of a proton gradient across the membrane. The catalytic sites are hosted primarily by the beta subunits. The chain is ATP synthase subunit beta from Mycoplasma genitalium (strain ATCC 33530 / DSM 19775 / NCTC 10195 / G37) (Mycoplasmoides genitalium).